Here is a 175-residue protein sequence, read N- to C-terminus: Co-chaperone protein HscB homolog (175 aa).

Residues 2–74 (NYFQLFNIEV…LQRAEYILVQ (73 aa)) enclose the J domain.

This sequence belongs to the HscB family. As to quaternary structure, interacts with HscA and stimulates its ATPase activity.

Functionally, co-chaperone involved in the maturation of iron-sulfur cluster-containing proteins. Seems to help targeting proteins to be folded toward HscA. The chain is Co-chaperone protein HscB homolog from Colwellia psychrerythraea (strain 34H / ATCC BAA-681) (Vibrio psychroerythus).